The sequence spans 307 residues: Serine/threonine-protein phosphatase 4 catalytic subunit (307 aa).

Mn(2+)-binding residues include Asp54, His56, Asp82, and Asn114. His115 acts as the Proton donor in catalysis. Mn(2+) is bound by residues His164 and His238. A Leucine methyl ester modification is found at Leu307.

This sequence belongs to the PPP phosphatase family. PP-4 (PP-X) subfamily. In terms of assembly, serine/threonine-protein phosphatase 4 (PP4) occurs in different assemblies of the catalytic and one or more regulatory subunits. Probably part of a PP4 PPP4C-PPP4R2-PPP4R3 complex containing Pp4-19C, PPP4R2r and flfl. Interacts with Ptpa; thereby mediating basal localization of the Miranda (Mira) complex; probably by dephosphorylation of Mira. Mn(2+) is required as a cofactor. Post-translationally, reversibly methyl esterified on Leu-307 by leucine carboxyl methyltransferase 1 (LCMT1) and protein phosphatase methylesterase 1 (PPME1). Carboxyl methylation influences the affinity of the catalytic subunit for the different regulatory subunits, thereby modulating the PP2A holoenzyme's substrate specificity, enzyme activity and cellular localization.

The protein localises to the cytoplasm. It localises to the nucleus. Its subcellular location is the cytoskeleton. It is found in the microtubule organizing center. The protein resides in the centrosome. It carries out the reaction O-phospho-L-seryl-[protein] + H2O = L-seryl-[protein] + phosphate. The enzyme catalyses O-phospho-L-threonyl-[protein] + H2O = L-threonyl-[protein] + phosphate. Protein phosphatase that regulates many processes such as microtubule organization at centrosomes. The probable PP4 complex Pp4-19C-PPP4R2r-flfl (PPP4C-PPP4R2-PPP4R3) is required to prevent caspase-induced cell death (in vitro). The sequence is that of Serine/threonine-protein phosphatase 4 catalytic subunit (Pp4-19C) from Drosophila melanogaster (Fruit fly).